We begin with the raw amino-acid sequence, 585 residues long: Proline--tRNA ligase (585 aa).

Belongs to the class-II aminoacyl-tRNA synthetase family. ProS type 1 subfamily. In terms of assembly, homodimer.

It is found in the cytoplasm. It catalyses the reaction tRNA(Pro) + L-proline + ATP = L-prolyl-tRNA(Pro) + AMP + diphosphate. Functionally, catalyzes the attachment of proline to tRNA(Pro) in a two-step reaction: proline is first activated by ATP to form Pro-AMP and then transferred to the acceptor end of tRNA(Pro). As ProRS can inadvertently accommodate and process non-cognate amino acids such as alanine and cysteine, to avoid such errors it has two additional distinct editing activities against alanine. One activity is designated as 'pretransfer' editing and involves the tRNA(Pro)-independent hydrolysis of activated Ala-AMP. The other activity is designated 'posttransfer' editing and involves deacylation of mischarged Ala-tRNA(Pro). The misacylated Cys-tRNA(Pro) is not edited by ProRS. In Cutibacterium acnes (strain DSM 16379 / KPA171202) (Propionibacterium acnes), this protein is Proline--tRNA ligase.